A 550-amino-acid chain; its full sequence is Keratin, type II cytoskeletal 74 (550 aa).

Positions 1–140 (MSRQLNIKSG…DPEIQKVRAQ (140 aa)) are head. Residues 141 to 176 (EREQIMALNNKFASFIDKVRFLEQQNQVLGTKWELL) are coil 1A. The region spanning 141–468 (EREQIMALNN…KLLEGEECWM (328 aa)) is the IF rod domain. The segment at 177 to 195 (QQMDLNNCRKNLEPILEGY) is linker 1. Residues 196–287 (IGNLRKQLEM…CLYDAEVAQI (92 aa)) form a coil 1B region. The segment at 288–311 (QTHTSETSVILSMDNNRYLDLDSI) is linker 12. A coil 2 region spans residues 312 to 464 (IAEVRAQYED…ATYSKLLEGE (153 aa)). Residues 465–550 (ECWMSGENPS…VSSRARKAAR (86 aa)) are tail. A disordered region spans residues 491-550 (HPGSSASTDLGASTMASTGTSSSSSTQSGQTRAKGARVGDPKDSQDKSTPVSSRARKAAR). Low complexity predominate over residues 502-521 (ASTMASTGTSSSSSTQSGQT). The segment covering 527-536 (RVGDPKDSQD) has biased composition (basic and acidic residues).

This sequence belongs to the intermediate filament family. Heterotetramer of two type I and two type II keratins.

Has a role in hair formation. Specific component of keratin intermediate filaments in the inner root sheath (IRS) of the hair follicle. In Bos taurus (Bovine), this protein is Keratin, type II cytoskeletal 74 (KRT74).